A 125-amino-acid chain; its full sequence is Ribonuclease P protein component (125 aa).

This sequence belongs to the RnpA family. As to quaternary structure, consists of a catalytic RNA component (M1 or rnpB) and a protein subunit.

It carries out the reaction Endonucleolytic cleavage of RNA, removing 5'-extranucleotides from tRNA precursor.. Its function is as follows. RNaseP catalyzes the removal of the 5'-leader sequence from pre-tRNA to produce the mature 5'-terminus. It can also cleave other RNA substrates such as 4.5S RNA. The protein component plays an auxiliary but essential role in vivo by binding to the 5'-leader sequence and broadening the substrate specificity of the ribozyme. This chain is Ribonuclease P protein component, found in Clostridium botulinum (strain Alaska E43 / Type E3).